A 106-amino-acid chain; its full sequence is Ribonuclease P protein component 4 (106 aa).

Zn(2+)-binding residues include cysteine 57, cysteine 60, cysteine 83, and cysteine 86.

Belongs to the eukaryotic/archaeal RNase P protein component 4 family. In terms of assembly, consists of a catalytic RNA component and at least 4-5 protein subunits. Requires Zn(2+) as cofactor.

It is found in the cytoplasm. It carries out the reaction Endonucleolytic cleavage of RNA, removing 5'-extranucleotides from tRNA precursor.. Its function is as follows. Part of ribonuclease P, a protein complex that generates mature tRNA molecules by cleaving their 5'-ends. This Saccharolobus solfataricus (strain ATCC 35092 / DSM 1617 / JCM 11322 / P2) (Sulfolobus solfataricus) protein is Ribonuclease P protein component 4.